The sequence spans 915 residues: Probable dipeptidyl-aminopeptidase B (915 aa).

2 disordered regions span residues 1-20 (MAGE…TRGS) and 52-74 (QDSR…NEEE). At 1-95 (MAGEKGGSRD…GGKTVQKTTK (95 aa)) the chain is on the cytoplasmic side. Residues 55–72 (RLGEKDQRDDDHDQYRNE) are compositionally biased toward basic and acidic residues. Residues 96–116 (IVLWALLFLCVGGWSLAFVIF) form a helical; Signal-anchor for type II membrane protein membrane-spanning segment. The Vacuolar portion of the chain corresponds to 117–915 (LFRGHDTPQT…RAETWGGLPV (799 aa)). 4 N-linked (GlcNAc...) asparagine glycosylation sites follow: N133, N179, N349, and N572. S754 (charge relay system) is an active-site residue. An N-linked (GlcNAc...) asparagine glycan is attached at N813. Active-site charge relay system residues include D831 and H864. N-linked (GlcNAc...) asparagine glycosylation occurs at N900.

This sequence belongs to the peptidase S9B family.

The protein resides in the vacuole membrane. It carries out the reaction Release of an N-terminal dipeptide, Xaa-Yaa-|-Zaa-, from a polypeptide, preferentially when Yaa is Pro, provided Zaa is neither Pro nor hydroxyproline.. In terms of biological role, type IV dipeptidyl-peptidase which removes N-terminal dipeptides sequentially from polypeptides having unsubstituted N-termini provided that the penultimate residue is proline. The protein is Probable dipeptidyl-aminopeptidase B (DAPB) of Blastomyces gilchristii (strain SLH14081) (Blastomyces dermatitidis).